A 521-amino-acid chain; its full sequence is Bifunctional purine biosynthesis protein PurH (521 aa).

The region spanning 1 to 147 is the MGS-like domain; that stretch reads MGEITRALIS…KNWEGVTVLV (147 aa).

The protein belongs to the PurH family.

It carries out the reaction (6R)-10-formyltetrahydrofolate + 5-amino-1-(5-phospho-beta-D-ribosyl)imidazole-4-carboxamide = 5-formamido-1-(5-phospho-D-ribosyl)imidazole-4-carboxamide + (6S)-5,6,7,8-tetrahydrofolate. It catalyses the reaction IMP + H2O = 5-formamido-1-(5-phospho-D-ribosyl)imidazole-4-carboxamide. Its pathway is purine metabolism; IMP biosynthesis via de novo pathway; 5-formamido-1-(5-phospho-D-ribosyl)imidazole-4-carboxamide from 5-amino-1-(5-phospho-D-ribosyl)imidazole-4-carboxamide (10-formyl THF route): step 1/1. It functions in the pathway purine metabolism; IMP biosynthesis via de novo pathway; IMP from 5-formamido-1-(5-phospho-D-ribosyl)imidazole-4-carboxamide: step 1/1. This is Bifunctional purine biosynthesis protein PurH from Acidithiobacillus ferrooxidans (strain ATCC 53993 / BNL-5-31) (Leptospirillum ferrooxidans (ATCC 53993)).